The sequence spans 887 residues: Pyruvate dehydrogenase E1 component (887 aa).

Positions 231, 261, and 263 each coordinate Mg(2+). The residue at position 716 (Lys-716) is an N6-acetyllysine.

In terms of assembly, homodimer. Part of the PDH complex, consisting of multiple copies of pyruvate dehydrogenase (E1), dihydrolipoamide acetyltransferase (E2) and lipoamide dehydrogenase (E3). Mg(2+) serves as cofactor. It depends on thiamine diphosphate as a cofactor.

It catalyses the reaction N(6)-[(R)-lipoyl]-L-lysyl-[protein] + pyruvate + H(+) = N(6)-[(R)-S(8)-acetyldihydrolipoyl]-L-lysyl-[protein] + CO2. Component of the pyruvate dehydrogenase (PDH) complex, that catalyzes the overall conversion of pyruvate to acetyl-CoA and CO(2). The sequence is that of Pyruvate dehydrogenase E1 component (aceE) from Escherichia coli O157:H7.